The chain runs to 407 residues: Na(+)-translocating NADH-quinone reductase subunit F (407 aa).

The chain crosses the membrane as a helical span at residues 3–23; sequence IILGVVMFTLIVLALTVMILF. The region spanning 32–126 is the 2Fe-2S ferredoxin-type domain; it reads GDITVEINED…NLKIELPEEI (95 aa). [2Fe-2S] cluster contacts are provided by cysteine 69, cysteine 75, cysteine 78, and cysteine 110. In terms of domain architecture, FAD-binding FR-type spans 129 to 269; sequence VKKWTCEVIS…SGPFGEFFAK (141 aa).

The protein belongs to the NqrF family. In terms of assembly, composed of six subunits; NqrA, NqrB, NqrC, NqrD, NqrE and NqrF. Requires [2Fe-2S] cluster as cofactor. FAD serves as cofactor.

Its subcellular location is the cell inner membrane. The catalysed reaction is a ubiquinone + n Na(+)(in) + NADH + H(+) = a ubiquinol + n Na(+)(out) + NAD(+). In terms of biological role, NQR complex catalyzes the reduction of ubiquinone-1 to ubiquinol by two successive reactions, coupled with the transport of Na(+) ions from the cytoplasm to the periplasm. The first step is catalyzed by NqrF, which accepts electrons from NADH and reduces ubiquinone-1 to ubisemiquinone by a one-electron transfer pathway. In Yersinia pseudotuberculosis serotype I (strain IP32953), this protein is Na(+)-translocating NADH-quinone reductase subunit F.